The sequence spans 1071 residues: Intracellular phospholipase A2 (1071 aa).

The disordered stretch occupies residues 1–22 (MTTTNKDGPFRQQYLPGVHKEP). ANK repeat units lie at residues 411 to 440 (ENCY…TLFC), 479 to 508 (DGQS…KFTR), 510 to 539 (DRNE…EIAN), 544 to 570 (LGNS…ELGL), 578 to 610 (AGET…NMNA), 614 to 651 (HGNT…KINL), and 652 to 681 (RGES…TRCP). The PNPLA domain occupies 748-921 (ISMDGGGIRG…ISNNPALDLM (174 aa)). A GXGXXG motif is present at residues 752 to 757 (GGGIRG). The short motif at 784 to 788 (GTSTG) is the GXSXG element. Residue Ser-786 is the Nucleophile of the active site. Asp-908 functions as the Proton acceptor in the catalytic mechanism. A DGA/G motif is present at residues 908–910 (DGG).

This sequence belongs to the patatin family.

The catalysed reaction is a 1,2-diacyl-sn-glycero-3-phosphocholine + H2O = a 1-acyl-sn-glycero-3-phosphocholine + a fatty acid + H(+). Functionally, phospholipase that plays a critical role during oogenesis, ovulation, and/or embryogenesis. This is Intracellular phospholipase A2 from Caenorhabditis elegans.